The chain runs to 692 residues: Elongation factor G (692 aa).

One can recognise a tr-type G domain in the interval 8–282; that stretch reads ENTRNIGIMA…GVVDYLPSPV (275 aa). Residues 17-24, 81-85, and 135-138 contribute to the GTP site; these read AHIDAGKT, DTPGH, and NKMD.

Belongs to the TRAFAC class translation factor GTPase superfamily. Classic translation factor GTPase family. EF-G/EF-2 subfamily.

Its subcellular location is the cytoplasm. Functionally, catalyzes the GTP-dependent ribosomal translocation step during translation elongation. During this step, the ribosome changes from the pre-translocational (PRE) to the post-translocational (POST) state as the newly formed A-site-bound peptidyl-tRNA and P-site-bound deacylated tRNA move to the P and E sites, respectively. Catalyzes the coordinated movement of the two tRNA molecules, the mRNA and conformational changes in the ribosome. In Geobacillus sp. (strain WCH70), this protein is Elongation factor G.